The primary structure comprises 173 residues: Peptide deformylase (173 aa).

2 residues coordinate Fe cation: Cys98 and His140. The active site involves Glu141. His144 is a binding site for Fe cation.

This sequence belongs to the polypeptide deformylase family. Fe(2+) is required as a cofactor.

The enzyme catalyses N-terminal N-formyl-L-methionyl-[peptide] + H2O = N-terminal L-methionyl-[peptide] + formate. Its function is as follows. Removes the formyl group from the N-terminal Met of newly synthesized proteins. Requires at least a dipeptide for an efficient rate of reaction. N-terminal L-methionine is a prerequisite for activity but the enzyme has broad specificity at other positions. The protein is Peptide deformylase of Caulobacter vibrioides (strain ATCC 19089 / CIP 103742 / CB 15) (Caulobacter crescentus).